A 664-amino-acid chain; its full sequence is MSEQKKSSKIIGIDLGTTNSCVSVMEGGQAKVITSSEGTRTTPSIVAFKGNETLVGIPAKRQAVTNPEKTLASTKRFIGRKHSEVESEIKTVPYKVASGSNGDVVFLVDGKQYTPEEIGAQVLIKMKETAEAYLGEPVTEAVITVPAYFNDSQRASTKDAGRIAGLDVKRIIPEPTAAALAYGIDKAGDKKIAVFDLGGGTFDISILEIGDGVFEVLSTNGDTHLGGDDFDEVIIKWMIEEFKKQEGIDLSKDNMALQRLKDAAEKAKIELSGVSSTEINQPFITMDASGPKHLTLTLTRAHFEKLASTLLERTKAPCQKALADAKLSASDIDDVLLVGGMSRMPAVQEVVKSIFGKEPNKGVNPDEVVAIGAAIQGGVLGGEVKDVLLLDVIPLSLGIETLGGVMTPLVERNTTIPTQKKQIFSTAADNQPAVTIVVLQGERPMAKDNKEIGRFDLTDIPPAPRGHPQIEVTFDIDANGILHVSAKDAASGREQKIRIEASSGLKEDEIQRMINDAEKHKEEDKKRREASDARNEADSMIFRAEKAISDYKDNIPESLVKEIEERIEKVRTVLKEEAPVEKIKDASEELSRHMQKIGEAMQSQSASAAASSAANAQGGPNINTEDLKKHSFSTKPPAGNSASSNSNNENIEEADVEIVDKPND.

Phosphothreonine; by autocatalysis is present on threonine 201. Disordered stretches follow at residues 516-538 (DAEK…NEAD) and 578-664 (APVE…KPND). Over residues 578–592 (APVEKIKDASEELSR) the composition is skewed to basic and acidic residues. 2 stretches are compositionally biased toward low complexity: residues 600-617 (AMQS…ANAQ) and 638-649 (AGNSASSNSNNE).

This sequence belongs to the heat shock protein 70 family.

Acts as a chaperone. The protein is Chaperone protein DnaK of Chlamydia caviae (strain ATCC VR-813 / DSM 19441 / 03DC25 / GPIC) (Chlamydophila caviae).